The primary structure comprises 181 residues: Protein TrbB (181 aa).

The signal sequence occupies residues 1–22; the sequence is MSLTKSLLFTLLLSAAAVQAST. The Thioredoxin domain occupies 37 to 172; that stretch reads TQPAQPAAGT…FMARVDTVLQ (136 aa).

Its subcellular location is the periplasm. In Escherichia coli (strain K12), this protein is Protein TrbB (trbB).